A 240-amino-acid chain; its full sequence is Cytochrome c-551 (240 aa).

Cysteine 41, cysteine 44, histidine 45, cysteine 128, cysteine 132, and histidine 133 together coordinate heme c.

Post-translationally, binds 2 heme c groups per subunit.

The polypeptide is Cytochrome c-551 (Rhodocyclus tenuis (Rhodospirillum tenue)).